A 312-amino-acid polypeptide reads, in one-letter code: Zinc-finger homeodomain protein 9 (312 aa).

The interval 1 to 27 (MLEVRSMDMTPKSPEPESETPTRIQPA) is disordered. At Ser-13 the chain carries Phosphoserine. The ZF-HD dimerization-type; degenerate zinc-finger motif lies at 52–103 (YKECLKNHAAAIGGHALDGCGEFMPSPSSTPSDPTSLKCAACGCHRNFHRRE). Disordered stretches follow at residues 128–155 (QPHHRHHPPPPLAPPLPRSPNSSSPPPI) and 253–312 (FSGG…SSSS). Residues 136–155 (PPPLAPPLPRSPNSSSPPPI) show a composition bias toward pro residues. The segment at residues 192–255 (RKRFRTKFSS…NNKNSFKFSG (64 aa)) is a DNA-binding region (homeobox). Ser-273 is subject to Phosphoserine.

Homo- and heterodimer with other ZFHD proteins. Interacts with MIF3; this interaction prevents nuclear localization and DNA-binding to inhibit transcription regulation activity. Binds to ZHD1, ZHD2 and ZHD11. As to expression, mostly expressed in flowers, stems and inflorescence and, to a lower extent, in leaves and stems.

The protein localises to the nucleus. Putative transcription factor. The protein is Zinc-finger homeodomain protein 9 (ZHD9) of Arabidopsis thaliana (Mouse-ear cress).